The following is a 246-amino-acid chain: Peptide methionine sulfoxide reductase (246 aa).

The Cysteine sulfenic acid (-SOH) intermediate role is filled by C48. A disulfide bridge links C48 with C246.

In terms of processing, conjugated to URM1, a ubiquitin-like protein.

It catalyses the reaction L-methionyl-[protein] + [thioredoxin]-disulfide + H2O = L-methionyl-(S)-S-oxide-[protein] + [thioredoxin]-dithiol. It carries out the reaction [thioredoxin]-disulfide + L-methionine + H2O = L-methionine (S)-S-oxide + [thioredoxin]-dithiol. In terms of biological role, has an important function as a repair enzyme for proteins that have been inactivated by oxidation. Catalyzes the reduction of methionine sulfoxide in proteins to methionine. Does not catalyze the reverse reaction involving the oxidation of methionine residues. This Drosophila melanogaster (Fruit fly) protein is Peptide methionine sulfoxide reductase.